Consider the following 429-residue polypeptide: Enolase (429 aa).

Glutamine 162 is a (2R)-2-phosphoglycerate binding site. Glutamate 204 functions as the Proton donor in the catalytic mechanism. Residues aspartate 241, glutamate 286, and aspartate 313 each coordinate Mg(2+). The (2R)-2-phosphoglycerate site is built by lysine 338, arginine 367, serine 368, and lysine 389. The active-site Proton acceptor is the lysine 338.

This sequence belongs to the enolase family. Mg(2+) is required as a cofactor.

The protein localises to the cytoplasm. The protein resides in the secreted. It localises to the cell surface. It carries out the reaction (2R)-2-phosphoglycerate = phosphoenolpyruvate + H2O. It functions in the pathway carbohydrate degradation; glycolysis; pyruvate from D-glyceraldehyde 3-phosphate: step 4/5. In terms of biological role, catalyzes the reversible conversion of 2-phosphoglycerate (2-PG) into phosphoenolpyruvate (PEP). It is essential for the degradation of carbohydrates via glycolysis. The protein is Enolase of Shouchella clausii (strain KSM-K16) (Alkalihalobacillus clausii).